Here is a 297-residue protein sequence, read N- to C-terminus: Protoheme IX farnesyltransferase (297 aa).

A run of 9 helical transmembrane segments spans residues 23-43 (VTQLAVFCAIIGMFLAVPGLP), 49-69 (VFGTLGIWLLAAAAFAINCLI), 90-110 (ISAAQVISLSGLLGGAGMLVL), 117-137 (LTMWLTFATFVGYAIIYTVIL), 144-164 (NIVIGGLSGAMPPALGWAAVA), 171-191 (AWVLVLIIFIWTPPHFWALAL), 215-235 (RLHILLYSLALVATTTLPYII), 238-258 (SGLLYLASALALGGMFVAYAW), and 277-297 (ILYLALLFAALLMDHWAGLLA).

Belongs to the UbiA prenyltransferase family. Protoheme IX farnesyltransferase subfamily.

Its subcellular location is the cell inner membrane. It carries out the reaction heme b + (2E,6E)-farnesyl diphosphate + H2O = Fe(II)-heme o + diphosphate. It functions in the pathway porphyrin-containing compound metabolism; heme O biosynthesis; heme O from protoheme: step 1/1. Functionally, converts heme B (protoheme IX) to heme O by substitution of the vinyl group on carbon 2 of heme B porphyrin ring with a hydroxyethyl farnesyl side group. In Bordetella petrii (strain ATCC BAA-461 / DSM 12804 / CCUG 43448), this protein is Protoheme IX farnesyltransferase.